Reading from the N-terminus, the 187-residue chain is MPVDLSKWSGPLSLQEVDEQPQHPLHVTYAGAALDELGKVLTPTQVKNRPTSISWDGLDSGKLYTLVLTDPDAPSRKDPKYREWHHFLVVNMKGNDISSGTVLSDYVGSGPPKGTGLHRYVWLVYEQARPLKCDEPILSNRSGDHRGKFKVASFRKKYELGAPVAGACYQAEWDDYVPKLYEQLSGK.

A phosphoserine mark is found at Ser6 and Ser13. Thr42 is subject to Phosphothreonine. Residues Ser52, Ser54, Ser98, and Ser153 each carry the phosphoserine modification. The interval Lys93–Asp134 is interaction with RAF1.

Belongs to the phosphatidylethanolamine-binding protein family. In terms of assembly, has a tendency to form dimers by disulfide cross-linking. Interacts with RAF1 and this interaction is enhanced if RAF1 is phosphorylated on residues 'Ser-338', 'Ser-339', 'Tyr-340' and 'Tyr-341'. Interacts with ALOX15; in response to IL13/interleukin-13, prevents the interaction of PEBP1 with RAF1 to activate the ERK signaling cascade.

The protein resides in the cytoplasm. In terms of biological role, binds ATP, opioids and phosphatidylethanolamine. Has lower affinity for phosphatidylinositol and phosphatidylcholine. Serine protease inhibitor which inhibits thrombin, neuropsin and chymotrypsin but not trypsin, tissue type plasminogen activator and elastase. Inhibits the kinase activity of RAF1 by inhibiting its activation and by dissociating the RAF1/MEK complex and acting as a competitive inhibitor of MEK phosphorylation. HCNP may be involved in the function of the presynaptic cholinergic neurons of the central nervous system. HCNP increases the production of choline acetyltransferase but not acetylcholinesterase. Seems to be mediated by a specific receptor. This is Phosphatidylethanolamine-binding protein 1 (PEBP1) from Macaca fascicularis (Crab-eating macaque).